A 113-amino-acid polypeptide reads, in one-letter code: Subtilisin inhibitor-like protein 2 (113 aa).

2 cysteine pairs are disulfide-bonded: C35-C50 and C71-C101.

Belongs to the protease inhibitor I16 (SSI) family. As to quaternary structure, homodimer.

The protein resides in the secreted. Inhibitor of subtilisin BPN' and trypsin. This is Subtilisin inhibitor-like protein 2 from Streptomyces rochei (Streptomyces parvullus).